Reading from the N-terminus, the 730-residue chain is Dynein axonemal intermediate chain 7 (730 aa).

Residues 1 to 14 show a composition bias toward basic residues; sequence MAPKSKKAPSKKKM. Positions 1 to 20 are disordered; that stretch reads MAPKSKKAPSKKKMTKAERL.

This sequence belongs to the DNAI7 family. Part of the multisubunit axonemal dynein complex formed at least of two heavy chains and a number of intermediate and light chains. Interacts with tubulin. Associates with microtubule. Ubiquitinated. Ubiquitination leads to its degradation through the 26S proteasome. Ubiquitin-proteasome-mediated DNAI7 degradation occurs in mitosis. High expressed in lung, kidney, and testis.

It is found in the cell projection. The protein localises to the cilium. The protein resides in the cytoplasm. In terms of biological role, via its association with the multisubunit axonemal dynein complex, is potentially involved in the regulation of cilia function. May also act as a cell cycle regulator. The sequence is that of Dynein axonemal intermediate chain 7 (Dnai7) from Mus musculus (Mouse).